The following is an 817-amino-acid chain: DNA-directed RNA polymerase subunit beta'' (817 aa).

Residues Cys-219, Cys-291, Cys-298, and Cys-301 each coordinate Zn(2+).

Belongs to the RNA polymerase beta' chain family. RpoC2 subfamily. In terms of assembly, in plastids the minimal PEP RNA polymerase catalytic core is composed of four subunits: alpha, beta, beta', and beta''. When a (nuclear-encoded) sigma factor is associated with the core the holoenzyme is formed, which can initiate transcription. Zn(2+) is required as a cofactor.

Its subcellular location is the plastid. The enzyme catalyses RNA(n) + a ribonucleoside 5'-triphosphate = RNA(n+1) + diphosphate. Its function is as follows. DNA-dependent RNA polymerase catalyzes the transcription of DNA into RNA using the four ribonucleoside triphosphates as substrates. The protein is DNA-directed RNA polymerase subunit beta'' (rpoC2) of Euglena longa (Euglenophycean alga).